The chain runs to 226 residues: PKHD-type hydroxylase PSPA7_5129 (226 aa).

Residues 78 to 178 (KVFPPLFNCY…RYASFFWTQS (101 aa)) form the Fe2OG dioxygenase domain. Positions 96, 98, and 159 each coordinate Fe cation. Arg-169 is a binding site for 2-oxoglutarate.

Fe(2+) is required as a cofactor. L-ascorbate serves as cofactor.

The chain is PKHD-type hydroxylase PSPA7_5129 from Pseudomonas paraeruginosa (strain DSM 24068 / PA7) (Pseudomonas aeruginosa (strain PA7)).